The chain runs to 553 residues: NAD(P)H-quinone oxidoreductase chain 4 2 (553 aa).

Helical transmembrane passes span F6–I26, V34–L54, I87–W107, L115–D135, L136–I156, F169–L189, A210–F230, S244–I264, I276–A296, V312–G332, A333–V353, V376–F396, V418–M438, and I487–A507.

Belongs to the complex I subunit 4 family.

Its subcellular location is the cellular thylakoid membrane. The enzyme catalyses a plastoquinone + NADH + (n+1) H(+)(in) = a plastoquinol + NAD(+) + n H(+)(out). It carries out the reaction a plastoquinone + NADPH + (n+1) H(+)(in) = a plastoquinol + NADP(+) + n H(+)(out). NDH-1 shuttles electrons from NAD(P)H, via FMN and iron-sulfur (Fe-S) centers, to quinones in the respiratory chain. The immediate electron acceptor for the enzyme in this species is believed to be plastoquinone. Couples the redox reaction to proton translocation (for every two electrons transferred, four hydrogen ions are translocated across the cytoplasmic membrane), and thus conserves the redox energy in a proton gradient. This chain is NAD(P)H-quinone oxidoreductase chain 4 2, found in Microcystis aeruginosa (strain NIES-843 / IAM M-2473).